Consider the following 564-residue polypeptide: Bicarbonate transporter BicA (564 aa).

At 1 to 11 the chain is on the cytoplasmic side; it reads MQITNKIHFRN. A helical membrane pass occupies residues 12–37; it reads LQGDLFGGVTAAVIALPMALAFGIAS. Topologically, residues 38–40 are periplasmic; the sequence is GAG. A helical membrane pass occupies residues 41–58; the sequence is ATAGLWGAVIVGFFAALF. The Cytoplasmic segment spans residues 59–70; sequence GGTPTLISEPTG. Hydrogencarbonate is bound at residue threonine 69. The helical transmembrane segment at 71–86 threads the bilayer; the sequence is PMTVVQTAVIASLVAA. The Periplasmic portion of the chain corresponds to 87 to 90; it reads DPDN. A helical transmembrane segment spans residues 91–112; that stretch reads GLAMAFTVVMMAGLFQIAFGLL. Over 113 to 122 the chain is Cytoplasmic; that stretch reads KLGKYVTMMP. The helical transmembrane segment at 123-145 threads the bilayer; it reads YTVISGFMSGIGIILVILQLAPF. The Periplasmic segment spans residues 146–170; it reads LGQASPKGGVIGTLQALPNLVSNVR. The chain crosses the membrane as a helical span at residues 171–185; it reads PVETLLALMTVGIIW. Topologically, residues 186-196 are cytoplasmic; that stretch reads FMPSRWKKFAP. The helical transmembrane segment at 197 to 211 threads the bilayer; it reads PQLVALVLGTIISIT. The Periplasmic portion of the chain corresponds to 212 to 240; that stretch reads LFGDLDIRRIGEIQAGLPALQLPVFQADQ. A helical membrane pass occupies residues 241–269; it reads LQRMLIDAAVLGMLGCIDALLTSVVADSL. 2 residues coordinate Na(+): aspartate 258 and threonine 262. Residues 270-275 lie on the Cytoplasmic side of the membrane; the sequence is TRTEHN. The helical transmembrane segment at 276-292 threads the bilayer; that stretch reads SNKELVGQGIGNVMSGL. Topologically, residues 293–302 are periplasmic; the sequence is FGGLGGAGAT. Glycine 300 is a binding site for Na(+). Alanine 301 provides a ligand contact to hydrogencarbonate. Position 302 (threonine 302) interacts with Na(+). A helical membrane pass occupies residues 303 to 312; that stretch reads MGTVVNIQSG. Over 313–315 the chain is Cytoplasmic; sequence GRT. Residues 316–338 form a helical membrane-spanning segment; that stretch reads ALSGLIRAMVLLVVILGAAKLAA. The Periplasmic segment spans residues 339–341; that stretch reads TIP. A helical transmembrane segment spans residues 342–357; the sequence is LAVLAGIAFKVGVDII. The Cytoplasmic portion of the chain corresponds to 358 to 369; the sequence is DWGFLKRAHHVS. Residues 370–390 traverse the membrane as a helical segment; that stretch reads IKGALIMYAVIVLTVLVDLIA. Residues 391-392 are Periplasmic-facing; the sequence is AV. Residues 393-405 traverse the membrane as a helical segment; that stretch reads GIGVFIANILTID. Topologically, residues 406-564 are cytoplasmic; it reads RMSALQSKAV…PSSSSVQTTY (159 aa). The STAS domain maps to 432-542; the sequence is KRWLDEGNGR…DDRSEALKDA (111 aa).

This sequence belongs to the SLC26A/SulP transporter (TC 2.A.53) family. Forms homodimers through the STAS cytoplasmic domain.

The protein localises to the cell inner membrane. In terms of biological role, low affinity, high-flux Na(+)-dependent bicarbonate transporter. Involved in carbone dioxide-concentrating mechanisms (CCMs) that accumulate CO(2) and improve photosynthetic carbon fixation. This chain is Bicarbonate transporter BicA, found in Synechocystis sp. (strain ATCC 27184 / PCC 6803 / Kazusa).